A 507-amino-acid polypeptide reads, in one-letter code: Sulfatase (507 aa).

Residues 1-18 (MKTRYFLLLGICMLSCRT) form the signal peptide. Residues D39, D40, and C79 each coordinate Ca(2+). C79 serves as the catalytic Nucleophile. The residue at position 79 (C79) is a 3-oxoalanine (Cys). H139 is an active-site residue. Ca(2+) contacts are provided by D325 and H326.

It belongs to the sulfatase family. It depends on Ca(2+) as a cofactor. Post-translationally, the conversion to 3-oxoalanine (also known as C-formylglycine, FGly), of a serine or cysteine residue in prokaryotes and of a cysteine residue in eukaryotes, is critical for catalytic activity. This post-translational modification is severely defective in multiple sulfatase deficiency (MSD).

Its subcellular location is the periplasm. In terms of biological role, sulfatase that may be involved in ulvan degradation. Ulvan is the main polysaccharide component of the Ulvales (green seaweed) cell wall. It is composed of disaccharide building blocks comprising 3-sulfated rhamnose (Rha3S) linked to D-glucuronic acid (GlcA), L-iduronic acid (IduA), or D-xylose (Xyl). Has no activity on different ulvan polymers. This Formosa agariphila (strain DSM 15362 / KCTC 12365 / LMG 23005 / KMM 3901 / M-2Alg 35-1) protein is Sulfatase.